Reading from the N-terminus, the 143-residue chain is Putative pre-16S rRNA nuclease (143 aa).

This sequence belongs to the YqgF nuclease family.

It is found in the cytoplasm. Its function is as follows. Could be a nuclease involved in processing of the 5'-end of pre-16S rRNA. This Leuconostoc citreum (strain KM20) protein is Putative pre-16S rRNA nuclease.